A 536-amino-acid chain; its full sequence is Ecdysone receptor (536 aa).

Residues Met1–Leu114 are modulating. The disordered stretch occupies residues Ser77 to Val107. 2 consecutive NR C4-type zinc fingers follow at residues Cys115–Cys135 and Cys151–Cys175. A DNA-binding region (nuclear receptor) is located at residues Cys115–Pro187. The NR LBD domain occupies Asn278–Asp514.

The protein belongs to the nuclear hormone receptor family. NR1 subfamily.

Its subcellular location is the nucleus. In terms of biological role, receptor for ecdysone. Binds to ecdysone response elements (ECRES). The protein is Ecdysone receptor (EcR) of Chironomus tentans (Midge).